The following is a 145-amino-acid chain: Conglutin (145 aa).

An N-terminal signal peptide occupies residues 1–21; it reads MAKSTILVALLALVLVAHASA. 5 disulfide bridges follow: cysteine 35–cysteine 92, cysteine 47–cysteine 79, cysteine 80–cysteine 128, cysteine 94–cysteine 136, and cysteine 105–cysteine 145.

It belongs to the 2S seed storage albumins family. As to expression, expressed in seeds. Not expressed in roots, pegs (budding ovaries) or leaves.

The sequence is that of Conglutin from Arachis hypogaea (Peanut).